Consider the following 829-residue polypeptide: MSASSSGGSPRFPSCGKNGVTSLTQKKVLRAPCGAPSVTVTKSHKRGMKGDTVNVRRSVRVKTKVPWMPPGKSSARPVGCKWENPPHCLEITPPSSEKLVSVMRLSDLSTEDDDSGHCKMNRYDKKIDSLMNAVGCLKSEVKMQKGERQMAKRFLEERKEELEEVAHELAETEHENTVLRHNIERMKEEKDFTILQKKHLQQEKECLMSKLVEAEMDGAAAAKQVMALKDTIGKLKTEKQMTCTDINTLTRQKELLLQKLSTFEETNRTLRDLLREQHCKEDSERLMEQQGALLKRLAEADSEKARLLLLLQDKDKEVEELLQEIQCEKAQAKTASELSKSMESMRGHLQAQLRSKEAENSRLCMQIKNLERSGNQHKAEVEAIMEQLKELKQKGDRDKESLKKAIRAQKERAEKSEEYAEQLHVQLADKDLYVAEALSTLESWRSRYNQVVKEKGDLELEIIVLNDRVTDLVNQQQTLEEKMREDRDSLVERLHRQTAEYSAFKLENERLKASFAPMEDKLNQAHLEVQQLKASVKNYEGMIDNYKSQVMKTRLEADEVAAQLERCDKENKILKDEMNKEIEAARRQFQSQLADLQQLPDILKITEAKLAECQDQLQGYERKNIDLTAIISDLRSRIEHQGDKLEMAREKHQASQKENKQLSLKVDELERKLEATSAQNIEFLQVIAKREEAIHQSQLRLEEKTRECGTLARQLESAIEDARRQVEQTKEHALSKERAAQNKILDLETQLSRTKTELSQLRRSRDDADRRYQSRLQDLKDRLEQSESTNRSMQNYVQFLKSSYANVFGDGPYSTFLTSSPIRSRSPPA.

Serine 73 and serine 74 each carry phosphoserine. The residue at position 92 (threonine 92) is a Phosphothreonine. At serine 95 the chain carries Phosphoserine; by TSSK4. Residues serine 106 and serine 109 each carry the phosphoserine modification. Threonine 110 carries the post-translational modification Phosphothreonine. Phosphoserine occurs at positions 115 and 129. Lysine 138 participates in a covalent cross-link: Glycyl lysine isopeptide (Lys-Gly) (interchain with G-Cter in SUMO2). Serine 139 is subject to Phosphoserine. Positions 144-217 form a coiled coil; sequence QKGERQMAKR…MSKLVEAEMD (74 aa). Threonine 231 carries the phosphothreonine modification. 2 coiled-coil regions span residues 245–423 and 461–798; these read DINT…AEQL and EIIV…NYVQ. Serine 261 bears the Phosphoserine mark. A disordered region spans residues 392–413; that stretch reads KQKGDRDKESLKKAIRAQKERA. Residues 537–701 form an interaction with BBOF1 region; sequence KNYEGMIDNY…EAIHQSQLRL (165 aa). Serine 632 carries the post-translational modification Phosphoserine.

It belongs to the ODF2 family. In terms of assembly, self-associates. Associates with microtubules and forms a fibrillar structure partially linked to the microtubule network. Interacts via its C-terminus with PLK1. Interacts with ODF1. Interacts with MARK4; the interaction is required for localization of ODF2 to centrioles. Interacts with TSSK4. Interacts with AKNA. Interacts with QRICH2. Interacts with CFAP58. Interacts with BBOF1. Interacts with CCDC38. Interacts with CCDC42. In terms of processing, tyrosine phosphorylated. Phosphorylated by TSSK4 on Ser-95. As to expression, testis-specific (at protein level). Highly expressed in cytoplasm of step 2 round spermatids. Detected in the middle piece and extends to about half the principal piece of the sperm tails.

Its subcellular location is the cytoplasm. It localises to the cytoskeleton. The protein localises to the microtubule organizing center. It is found in the centrosome. The protein resides in the cell projection. Its subcellular location is the cilium. It localises to the centriole. The protein localises to the spindle pole. It is found in the flagellum. Functionally, seems to be a major component of sperm tail outer dense fibers (ODF). ODFs are filamentous structures located on the outside of the axoneme in the midpiece and principal piece of the mammalian sperm tail and may help to maintain the passive elastic structures and elastic recoil of the sperm tail. May have a modulating influence on sperm motility. Functions as a general scaffold protein that is specifically localized at the distal/subdistal appendages of mother centrioles. Component of the centrosome matrix required for the localization of PLK1 and NIN to the centrosomes. Required for the formation and/or maintenance of normal CETN1 assembly. The polypeptide is Outer dense fiber protein 2 (ODF2) (Homo sapiens (Human)).